The following is a 100-amino-acid chain: Small ribosomal subunit protein uS14c (100 aa).

The segment at 1–31 (MARKSLIQREKKRQKLEQKYHSIRRSSKKEI) is disordered.

The protein belongs to the universal ribosomal protein uS14 family. Part of the 30S ribosomal subunit.

The protein resides in the plastid. The protein localises to the chloroplast. Binds 16S rRNA, required for the assembly of 30S particles. The sequence is that of Small ribosomal subunit protein uS14c from Solanum bulbocastanum (Wild potato).